Consider the following 20-residue polypeptide: Collagenolytic protease 35 kDa 2 (20 aa).

The 20-residue stretch at 1-20 (IVGGTEVTPGEIPYQLSFQD) folds into the Peptidase S1 domain. The interval 1-20 (IVGGTEVTPGEIPYQLSFQD) is disordered.

This sequence belongs to the peptidase S1 family.

It carries out the reaction Hydrolysis of proteins, with broad specificity for peptide bonds. Native collagen is cleaved about 75% of the length of the molecule from the N-terminus. Low activity on small molecule substrates of both trypsin and chymotrypsin.. This enzyme is a serine protease capable of degrading the native triple helix of collagen. The chain is Collagenolytic protease 35 kDa 2 from Chionoecetes opilio (Atlantic snow crab).